Here is a 247-residue protein sequence, read N- to C-terminus: ATP synthase subunit a, chloroplastic (247 aa).

5 helical membrane passes run 38–58 (QVLITSWVVIAILLGSASIAV), 95–115 (VPFIGTMFLFIFVSNWSGALL), 134–154 (INTTVALALLTSVAYFYAGLS), 199–219 (LVVVVLVSLVPSVVPIPVMFL), and 220–240 (GLFTSGIQALIFATLAAAYIG).

The protein belongs to the ATPase A chain family. F-type ATPases have 2 components, CF(1) - the catalytic core - and CF(0) - the membrane proton channel. CF(1) has five subunits: alpha(3), beta(3), gamma(1), delta(1), epsilon(1). CF(0) has four main subunits: a, b, b' and c.

It localises to the plastid. The protein localises to the chloroplast thylakoid membrane. Its function is as follows. Key component of the proton channel; it plays a direct role in the translocation of protons across the membrane. The chain is ATP synthase subunit a, chloroplastic from Oenothera argillicola (Appalachian evening primrose).